Consider the following 525-residue polypeptide: Peptide chain release factor 3 (525 aa).

Positions 8 to 276 (AMRRTFAIIS…AFVKEAPPPQ (269 aa)) constitute a tr-type G domain. Residues 17 to 24 (SHPDAGKT), 85 to 89 (DTPGH), and 139 to 142 (NKMD) contribute to the GTP site.

The protein belongs to the TRAFAC class translation factor GTPase superfamily. Classic translation factor GTPase family. PrfC subfamily.

The protein resides in the cytoplasm. Functionally, increases the formation of ribosomal termination complexes and stimulates activities of RF-1 and RF-2. It binds guanine nucleotides and has strong preference for UGA stop codons. It may interact directly with the ribosome. The stimulation of RF-1 and RF-2 is significantly reduced by GTP and GDP, but not by GMP. This Coxiella burnetii (strain CbuK_Q154) (Coxiella burnetii (strain Q154)) protein is Peptide chain release factor 3.